The chain runs to 873 residues: Coatomer subunit gamma-2 (873 aa).

The segment covering Met-1–Glu-11 has biased composition (basic and acidic residues). The segment at Met-1–Asn-21 is disordered. 6 HEAT repeats span residues Thr-64–Asp-101, Arg-283–Ser-320, Ala-321–Ser-355, Ser-356–Arg-392, His-394–Glu-430, and Pro-467–Asp-504.

It belongs to the COPG family. As to quaternary structure, oligomeric complex.

It localises to the cytoplasm. Its subcellular location is the golgi apparatus membrane. The protein resides in the cytoplasmic vesicle. The protein localises to the COPI-coated vesicle membrane. The coatomer is a cytosolic protein complex that binds to dilysine motifs and reversibly associates with Golgi non-clathrin-coated vesicles, which further mediate biosynthetic protein transport from the ER, via the Golgi up to the trans Golgi network. Coatomer complex is required for budding from Golgi membranes, and is essential for the retrograde Golgi-to-ER transport of dilysine-tagged proteins. The protein is Coatomer subunit gamma-2 (copg2) of Takifugu rubripes (Japanese pufferfish).